The sequence spans 279 residues: MTQRMDKRFADLKEEGRPALVTYFMGGDPDFETSLAIMKALPQAGADVIELGMPFSDPMADGPAIQMAGQRALKAGQTLVKTLDMAREFRKGDQATPIVMMGYYNPIYVYGVEKFLDDALDAGIDGLIVVDLPPEMDDELCLPARKRDINFIRLATPTTDEKRLPMVLQNTSGFVYYVSMNGITGSALPDPSKVAGAVGRIKAHTDLPICVGFGVKTAEHARLIGASADGVVVGTAIVNQVALSLTKDDKATADTVQSVVTLVRGLASGVQTARLAAAQ.

Active-site proton acceptor residues include glutamate 50 and aspartate 61.

Belongs to the TrpA family. As to quaternary structure, tetramer of two alpha and two beta chains.

The enzyme catalyses (1S,2R)-1-C-(indol-3-yl)glycerol 3-phosphate + L-serine = D-glyceraldehyde 3-phosphate + L-tryptophan + H2O. Its pathway is amino-acid biosynthesis; L-tryptophan biosynthesis; L-tryptophan from chorismate: step 5/5. In terms of biological role, the alpha subunit is responsible for the aldol cleavage of indoleglycerol phosphate to indole and glyceraldehyde 3-phosphate. The protein is Tryptophan synthase alpha chain of Allorhizobium ampelinum (strain ATCC BAA-846 / DSM 112012 / S4) (Agrobacterium vitis (strain S4)).